The chain runs to 241 residues: Purine nucleoside phosphorylase DeoD-type 1 (241 aa).

Histidine 5 is an a purine D-ribonucleoside binding site. Phosphate is bound by residues glycine 21, arginine 25, arginine 44, and 88 to 91 (RVGS). A purine D-ribonucleoside is bound by residues 180 to 182 (EME) and 204 to 205 (SD). The active-site Proton donor is aspartate 205.

The protein belongs to the PNP/UDP phosphorylase family. Homohexamer; trimer of homodimers.

It catalyses the reaction a purine D-ribonucleoside + phosphate = a purine nucleobase + alpha-D-ribose 1-phosphate. It carries out the reaction a purine 2'-deoxy-D-ribonucleoside + phosphate = a purine nucleobase + 2-deoxy-alpha-D-ribose 1-phosphate. Catalyzes the reversible phosphorolytic breakdown of the N-glycosidic bond in the beta-(deoxy)ribonucleoside molecules, with the formation of the corresponding free purine bases and pentose-1-phosphate. This chain is Purine nucleoside phosphorylase DeoD-type 1, found in Photobacterium profundum (strain SS9).